The primary structure comprises 420 residues: Hemocyanin 2-c chain (420 aa).

Residues 1–12 are compositionally biased toward basic residues; that stretch reads DFGHSKKIRKNV. The tract at residues 1-20 is disordered; the sequence is DFGHSKKIRKNVHSLTAEEQ. His-46 lines the Cu cation pocket. A disulfide bridge links Cys-52 with Cys-63. Residues His-66, His-73, His-185, His-189, and His-216 each coordinate Cu cation. Disulfide bonds link Cys-175-Cys-242 and Cys-335-Cys-342.

Post-translationally, O-glycosylated. As to expression, hemolymph.

It is found in the secreted. Its subcellular location is the extracellular space. Its function is as follows. Hemocyanins are copper-containing oxygen carriers occurring freely dissolved in the hemolymph of many mollusks and arthropods. The polypeptide is Hemocyanin 2-c chain (Megathura crenulata (Giant keyhole limpet)).